The chain runs to 556 residues: Formate--tetrahydrofolate ligase (556 aa).

T65–S72 serves as a coordination point for ATP.

Belongs to the formate--tetrahydrofolate ligase family.

The catalysed reaction is (6S)-5,6,7,8-tetrahydrofolate + formate + ATP = (6R)-10-formyltetrahydrofolate + ADP + phosphate. The protein operates within one-carbon metabolism; tetrahydrofolate interconversion. This Streptococcus pneumoniae serotype 19F (strain G54) protein is Formate--tetrahydrofolate ligase.